We begin with the raw amino-acid sequence, 260 residues long: Tryptophan 2,3-dioxygenase (260 aa).

Substrate contacts are provided by residues Phe34–His38 and Arg100. His219 contributes to the heme binding site. Residue Thr233 participates in substrate binding.

It belongs to the tryptophan 2,3-dioxygenase family. As to quaternary structure, homotetramer. The cofactor is heme.

It carries out the reaction L-tryptophan + O2 = N-formyl-L-kynurenine. Its pathway is amino-acid degradation; L-tryptophan degradation via kynurenine pathway; L-kynurenine from L-tryptophan: step 1/2. Heme-dependent dioxygenase that catalyzes the oxidative cleavage of the L-tryptophan (L-Trp) pyrrole ring and converts L-tryptophan to N-formyl-L-kynurenine. Catalyzes the oxidative cleavage of the indole moiety. This chain is Tryptophan 2,3-dioxygenase, found in Herpetosiphon aurantiacus (strain ATCC 23779 / DSM 785 / 114-95).